The chain runs to 445 residues: Protein cereblon (445 aa).

The segment at 1 to 48 (MAGEGDQQDAAHNMGNHLPLLPADSEDEDDEIEMEVEDQDSKEARKPN) is disordered. The span at 24–38 (DSEDEDDEIEMEVED) shows a compositional bias: acidic residues. Ser25 bears the Phosphoserine mark. A Lon N-terminal domain is found at 84 to 322 (IPVLPEVLMI…CELDIMNKCT (239 aa)). The CULT domain occupies 321–429 (CTSLCCKQCQ…LTRSALLPTI (109 aa)). Residues Cys326 and Cys329 each contribute to the Zn(2+) site. (S)-thalidomide is bound by residues His381, Trp383, and Trp389. 2 residues coordinate Zn(2+): Cys394 and Cys397.

This sequence belongs to the CRBN family. As to quaternary structure, component of a DCX (DDB1-CUL4-X-box) protein ligase complex, at least composed of CRBN, CUL4A, DDB1 and RBX1. Interacts directly with DDB1. Interacts with KCNT1. Interacts with ILF2. Interacts with TRAF6 and ECSIT. Post-translationally, ubiquitinated, ubiquitination is mediated by its own DCX protein ligase complex. In terms of tissue distribution, highly expressed in brain.

It is found in the cytoplasm. It localises to the nucleus. The protein localises to the membrane. It participates in protein modification; protein ubiquitination. In terms of biological role, substrate recognition component of a DCX (DDB1-CUL4-X-box) E3 protein ligase complex that mediates the ubiquitination and subsequent proteasomal degradation of target proteins, such as MEIS2, ILF2 or GLUL. Normal degradation of key regulatory proteins is required for normal limb outgrowth and expression of the fibroblast growth factor FGF8. Maintains presynaptic glutamate release and consequently, cognitive functions such as memory and learning, by negatively regulating large-conductance calcium-activated potassium (BK) channels in excitatory neurons. Likely to function by regulating the assembly and neuronal surface expression of BK channels via its interaction with KCNT1. May also be involved in regulating anxiety-like behaviors via a BK channel-independent mechanism. Plays a negative role in TLR4 signaling by interacting with TRAF6 and ECSIT, leading to inhibition of ECSIT ubiquitination, an important step of the signaling. This is Protein cereblon (Crbn) from Mus musculus (Mouse).